We begin with the raw amino-acid sequence, 312 residues long: Ribosomal protein L11 methyltransferase (312 aa).

The S-adenosyl-L-methionine site is built by T163, G184, D206, and N248.

This sequence belongs to the methyltransferase superfamily. PrmA family.

Its subcellular location is the cytoplasm. The catalysed reaction is L-lysyl-[protein] + 3 S-adenosyl-L-methionine = N(6),N(6),N(6)-trimethyl-L-lysyl-[protein] + 3 S-adenosyl-L-homocysteine + 3 H(+). Methylates ribosomal protein L11. In Clostridium botulinum (strain Okra / Type B1), this protein is Ribosomal protein L11 methyltransferase.